We begin with the raw amino-acid sequence, 1116 residues long: Rho GTPase-activating protein 45 (1116 aa).

The interval 1–72 (MFSRKKRELM…RPTSLSRHAS (72 aa)) is disordered. Over residues 22–31 (GSPNPQSSSG) the composition is skewed to polar residues. A phosphoserine mark is found at Ser-23, Ser-72, Ser-92, and Ser-98. The F-BAR domain occupies 268–538 (EEVDMLLQRC…SSKLYDPGQQ (271 aa)). The stretch at 375–498 (EHERRRKEIK…QIQEVIRQSD (124 aa)) forms a coiled coil. Positions 422-457 (VAKAEEEQQGTGPGAGTAASKALDKRRRLEEEAKNK) are disordered. Positions 448-457 (RRLEEEAKNK) are enriched in basic and acidic residues. A phosphoserine mark is found at Ser-568, Ser-577, Ser-591, and Ser-618. The disordered stretch occupies residues 569 to 658 (PIMRTRKGSF…MSSSEELGDQ (90 aa)). Over residues 621–635 (ISISDTEVGLDTSSG) the composition is skewed to polar residues. Low complexity predominate over residues 643–652 (TSSSGTMSSS). The Phorbol-ester/DAG-type zinc finger occupies 699 to 744 (THRLRKLRTPAKCRECNSYVYFQGAECEECCLACHKKCLETLAIQC). The region spanning 758–971 (QDFSQAALST…TLIVHYGLVF (214 aa)) is the Rho-GAP domain. Residues Ser-946, Ser-1017, Ser-1020, and Ser-1022 each carry the phosphoserine modification. 2 disordered regions span residues 1004–1035 (EEAEDGSRESHAASNDSDSELEDASDPLSSSD) and 1050–1116 (AGLE…PQFV). 2 stretches are compositionally biased toward polar residues: residues 1080-1090 (FNTNQSNNTSR) and 1105-1116 (GGTSQERQPQFV).

The protein resides in the cytoplasm. Its subcellular location is the cell projection. It is found in the ruffle membrane. Functionally, contains a GTPase activator for the Rho-type GTPases (RhoGAP) domain that would be able to negatively regulate the actin cytoskeleton as well as cell spreading. However, also contains N-terminally a BAR-domin which is able to play an autoinhibitory effect on this RhoGAP activity. This is Rho GTPase-activating protein 45 from Mus musculus (Mouse).